A 427-amino-acid polypeptide reads, in one-letter code: Putative B3 domain-containing protein Os04g0346900 (427 aa).

DNA-binding regions (TF-B3) lie at residues 25 to 118 (LVPS…FDTT) and 140 to 236 (KPQF…FGPN). The tract at residues 253 to 309 (TGEQQEAPSFSRRKCNNKKKSRFGEDDGNQQEMPCSRKGSGNKGRTSDRETKRMRKT) is disordered. Positions 263 to 273 (SRRKCNNKKKS) are enriched in basic residues. Residues 320–427 (WIKKEINEYV…TLWRVDIERC (108 aa)) constitute a DNA-binding region (TF-B3 3).

The protein localises to the nucleus. The protein is Putative B3 domain-containing protein Os04g0346900 of Oryza sativa subsp. japonica (Rice).